Reading from the N-terminus, the 336-residue chain is Glyceraldehyde-3-phosphate dehydrogenase (336 aa).

Residues 12–13 (RI), aspartate 34, and serine 120 contribute to the NAD(+) site. Residues 150–152 (SCT), threonine 181, arginine 198, 211–212 (TG), and arginine 234 contribute to the D-glyceraldehyde 3-phosphate site. Cysteine 151 (nucleophile) is an active-site residue. Asparagine 316 provides a ligand contact to NAD(+).

Belongs to the glyceraldehyde-3-phosphate dehydrogenase family. In terms of assembly, homotetramer.

It localises to the cytoplasm. The enzyme catalyses D-glyceraldehyde 3-phosphate + phosphate + NAD(+) = (2R)-3-phospho-glyceroyl phosphate + NADH + H(+). It participates in carbohydrate degradation; glycolysis; pyruvate from D-glyceraldehyde 3-phosphate: step 1/5. In terms of biological role, catalyzes the oxidative phosphorylation of glyceraldehyde 3-phosphate (G3P) to 1,3-bisphosphoglycerate (BPG) using the cofactor NAD. The first reaction step involves the formation of a hemiacetal intermediate between G3P and a cysteine residue, and this hemiacetal intermediate is then oxidized to a thioester, with concomitant reduction of NAD to NADH. The reduced NADH is then exchanged with the second NAD, and the thioester is attacked by a nucleophilic inorganic phosphate to produce BPG. The polypeptide is Glyceraldehyde-3-phosphate dehydrogenase (gapA) (Staphylococcus aureus).